We begin with the raw amino-acid sequence, 156 residues long: Small ribosomal subunit protein uS7 (156 aa).

Belongs to the universal ribosomal protein uS7 family. As to quaternary structure, part of the 30S ribosomal subunit. Contacts proteins S9 and S11.

In terms of biological role, one of the primary rRNA binding proteins, it binds directly to 16S rRNA where it nucleates assembly of the head domain of the 30S subunit. Is located at the subunit interface close to the decoding center, probably blocks exit of the E-site tRNA. This is Small ribosomal subunit protein uS7 from Arthrobacter sp. (strain FB24).